A 2824-amino-acid polypeptide reads, in one-letter code: Highly reducing polyketide synthase stpks1 (2824 aa).

A Ketosynthase family 3 (KS3) domain is found at 8-428 (PKPVAVVGIS…GANGHVIAES (421 aa)). Residues cysteine 177, histidine 312, and histidine 348 each act as for beta-ketoacyl synthase activity in the active site. Positions 517 to 854 (QLVFVFSGQG…LTAVGNLSTL (338 aa)) are malonyl-CoA:ACP transacylase (MAT) domain. The active-site For malonyltransferase activity is the serine 616. The tract at residues 886–1004 (MPFYSESSEL…GFMTTEVMDK (119 aa)) is N-terminal hotdog fold. Positions 886 to 1168 (MPFYSESSEL…SKHWTGAVPT (283 aa)) constitute a PKS/mFAS DH domain. A dehydratase (DH) domain region spans residues 894 to 1083 (ELAVKMKRSR…PSLLDSCIHG (190 aa)). The Proton acceptor; for dehydratase activity role is filled by histidine 925. The interval 1018–1168 (TTPADISNLY…SKHWTGAVPT (151 aa)) is C-terminal hotdog fold. Aspartate 1078 acts as the Proton donor; for dehydratase activity in catalysis. Positions 1101 to 1449 (PSHIGRVTLY…KFQVVDGAQD (349 aa)) are methyltransferase (CMet) domain. A disordered region spans residues 1213 to 1232 (APPSANGHANGHANGSANGS). The enoyl reductase (ER) domain stretch occupies residues 1518–1840 (TGTFDGAVAT…LPSDFSVSQS (323 aa)). Residues 1842-2096 (ALADDKTYLV…SESVLYNHLV (255 aa)) form a ketoreductase (KR) domain region. A Carrier domain is found at 2109-2196 (DPYEVLQEIV…TAVSTAEKPF (88 aa)). Positions 2200–2414 (AMHQPGQTIL…WASSDATTRM (215 aa)) are thioesterase (TE) domain. The interval 2608-2809 (YRQNKVFTSM…ATGYSNVQVC (202 aa)) is methyltransferase (CMet) domain.

The protein operates within mycotoxin biosynthesis. Functionally, highly reducing polyketide synthase; part of the gene cluster that mediates the biosynthesis of strobilurin A, an antifungal polyketide that contains a key beta-methoxyacrylate toxophore that targets the complex III of the mitochondrial electron transport chain. Strobilurin biosynthesis begins with construction of benzoyl CoA by step-wise elimination of ammonia from phenylalanine by the phenylalanine ammonia-lyase str11, oxygenation by str8 and retro-Claisen reaction to form benzoic acid, which is activated to its CoA thiolester benzoyl CoA by the dedicated CoA ligase str10. Benzoyl CoA forms the starter unit for the highly reducing polyketide synthase stpks1 that produces the polyketide prestrobilutin A. The FAD-dependent oxygenase str9 then catalyzes the key oxidative rearrangement responsible for the creation of the beta-methoxyacrylate toxophore. Str9 performs epoxidation of the 2,3 olefin of prestrobilutin A, followed by Meinwald rearrangement to furnish the aldehyde intermediate. Rapid enolization of the aldehyde intermediate would give the beta-methoxyacrylate skeleton and methylations catalyzed by str2 and str3 complete the synthesis and lead to the production of strobilurin A. The short-chain dehydrogenase stl2 and the dehydrogenase str4 play a role in the shunt pathway leading to the production of bolineol. The cluster encodes no obvious halogenase gene that could be involved in production of strobilurin B, nor any obvious dimethylallyl-transferase that could be involved in the production of strobilurin G. It is possible that unknown proteins encoded in, or near, the cluster (such as str1 or stl1) may form new classes of halogenases or dimethylally-transferases, or that the responsible genes are located elsewhere on the genome. Similarly, proteins encoded by str5/str6 hydrolases appear to have no chemical role in the biosynthesis of strobilurin A. Finally, no obvious self-resistance gene is found within the cluster. This is Highly reducing polyketide synthase stpks1 from Strobilurus tenacellus.